Here is a 492-residue protein sequence, read N- to C-terminus: Cysteine--tRNA ligase (492 aa).

Cys-29 is a Zn(2+) binding site. Residues Leu-31–His-41 carry the 'HIGH' region motif. Residues Cys-229, His-254, and Glu-258 each coordinate Zn(2+). The 'KMSKS' region signature appears at Lys-286 to Ser-290.

It belongs to the class-I aminoacyl-tRNA synthetase family. The cofactor is Zn(2+).

It localises to the cytoplasm. The catalysed reaction is tRNA(Cys) + L-cysteine + ATP = L-cysteinyl-tRNA(Cys) + AMP + diphosphate. The chain is Cysteine--tRNA ligase from Haloarcula marismortui (strain ATCC 43049 / DSM 3752 / JCM 8966 / VKM B-1809) (Halobacterium marismortui).